A 120-amino-acid chain; its full sequence is Myohemerythrin (120 aa).

Residues histidine 26, histidine 56, glutamate 60, histidine 75, histidine 79, histidine 108, and aspartate 113 each coordinate Fe cation.

Belongs to the hemerythrin family.

Functionally, myohemerythrin is an oxygen-binding protein found in the retractor muscles of certain worms. The oxygen-binding site contains two iron atoms. The protein is Myohemerythrin of Riftia pachyptila (Vent tube worm).